A 227-amino-acid polypeptide reads, in one-letter code: Cytidylate kinase (227 aa).

Residue 12–20 (GPSGAGKGT) coordinates ATP.

It belongs to the cytidylate kinase family. Type 1 subfamily.

The protein resides in the cytoplasm. It catalyses the reaction CMP + ATP = CDP + ADP. It carries out the reaction dCMP + ATP = dCDP + ADP. The polypeptide is Cytidylate kinase (Shigella flexneri).